The chain runs to 154 residues: 17 kDa surface antigen (154 aa).

The first 19 residues, Met-1 to Ala-19, serve as a signal peptide directing secretion. Cys-20 carries the N-palmitoyl cysteine lipid modification. Cys-20 is lipidated: S-diacylglycerol cysteine.

It belongs to the rickettsiale 17 kDa surface antigen family.

Its subcellular location is the cell outer membrane. The polypeptide is 17 kDa surface antigen (omp) (Rickettsia parkeri).